A 368-amino-acid chain; its full sequence is DNA replication and repair protein RecF (368 aa).

30-37 provides a ligand contact to ATP; that stretch reads GKNGTGKT.

Belongs to the RecF family.

It localises to the cytoplasm. Its function is as follows. The RecF protein is involved in DNA metabolism; it is required for DNA replication and normal SOS inducibility. RecF binds preferentially to single-stranded, linear DNA. It also seems to bind ATP. The polypeptide is DNA replication and repair protein RecF (Chloroherpeton thalassium (strain ATCC 35110 / GB-78)).